Here is a 60-residue protein sequence, read N- to C-terminus: UPF0434 protein YcaR (60 aa).

Belongs to the UPF0434 family.

In Salmonella agona (strain SL483), this protein is UPF0434 protein YcaR.